The sequence spans 237 residues: Leucyl/phenylalanyl-tRNA--protein transferase (237 aa).

Belongs to the L/F-transferase family.

The protein resides in the cytoplasm. The catalysed reaction is N-terminal L-lysyl-[protein] + L-leucyl-tRNA(Leu) = N-terminal L-leucyl-L-lysyl-[protein] + tRNA(Leu) + H(+). It catalyses the reaction N-terminal L-arginyl-[protein] + L-leucyl-tRNA(Leu) = N-terminal L-leucyl-L-arginyl-[protein] + tRNA(Leu) + H(+). It carries out the reaction L-phenylalanyl-tRNA(Phe) + an N-terminal L-alpha-aminoacyl-[protein] = an N-terminal L-phenylalanyl-L-alpha-aminoacyl-[protein] + tRNA(Phe). Functions in the N-end rule pathway of protein degradation where it conjugates Leu, Phe and, less efficiently, Met from aminoacyl-tRNAs to the N-termini of proteins containing an N-terminal arginine or lysine. In Shewanella baltica (strain OS195), this protein is Leucyl/phenylalanyl-tRNA--protein transferase.